The sequence spans 231 residues: Phosphatidylserine decarboxylase proenzyme (231 aa).

The Schiff-base intermediate with substrate; via pyruvic acid role is filled by S188. S188 is subject to Pyruvic acid (Ser); by autocatalysis.

The protein belongs to the phosphatidylserine decarboxylase family. PSD-A subfamily. In terms of assembly, heterodimer of a large membrane-associated beta subunit and a small pyruvoyl-containing alpha subunit. Requires pyruvate as cofactor. Post-translationally, is synthesized initially as an inactive proenzyme. Formation of the active enzyme involves a self-maturation process in which the active site pyruvoyl group is generated from an internal serine residue via an autocatalytic post-translational modification. Two non-identical subunits are generated from the proenzyme in this reaction, and the pyruvate is formed at the N-terminus of the alpha chain, which is derived from the carboxyl end of the proenzyme. The post-translation cleavage follows an unusual pathway, termed non-hydrolytic serinolysis, in which the side chain hydroxyl group of the serine supplies its oxygen atom to form the C-terminus of the beta chain, while the remainder of the serine residue undergoes an oxidative deamination to produce ammonia and the pyruvoyl prosthetic group on the alpha chain.

The protein resides in the cell membrane. The enzyme catalyses a 1,2-diacyl-sn-glycero-3-phospho-L-serine + H(+) = a 1,2-diacyl-sn-glycero-3-phosphoethanolamine + CO2. Its pathway is phospholipid metabolism; phosphatidylethanolamine biosynthesis; phosphatidylethanolamine from CDP-diacylglycerol: step 2/2. Its function is as follows. Catalyzes the formation of phosphatidylethanolamine (PtdEtn) from phosphatidylserine (PtdSer). In Rickettsia felis (strain ATCC VR-1525 / URRWXCal2) (Rickettsia azadi), this protein is Phosphatidylserine decarboxylase proenzyme.